A 348-amino-acid chain; its full sequence is Anthranilate phosphoribosyltransferase (348 aa).

Residues glycine 93, 96–97 (GD), threonine 101, 103–106 (NVST), 121–129 (KHGNRAVSS), and serine 133 each bind 5-phospho-alpha-D-ribose 1-diphosphate. Glycine 93 is an anthranilate binding site. Serine 105 lines the Mg(2+) pocket. Position 124 (asparagine 124) interacts with anthranilate. Arginine 179 provides a ligand contact to anthranilate. 2 residues coordinate Mg(2+): aspartate 238 and glutamate 239.

It belongs to the anthranilate phosphoribosyltransferase family. Homodimer. It depends on Mg(2+) as a cofactor.

It carries out the reaction N-(5-phospho-beta-D-ribosyl)anthranilate + diphosphate = 5-phospho-alpha-D-ribose 1-diphosphate + anthranilate. Its pathway is amino-acid biosynthesis; L-tryptophan biosynthesis; L-tryptophan from chorismate: step 2/5. Its function is as follows. Catalyzes the transfer of the phosphoribosyl group of 5-phosphorylribose-1-pyrophosphate (PRPP) to anthranilate to yield N-(5'-phosphoribosyl)-anthranilate (PRA). The polypeptide is Anthranilate phosphoribosyltransferase (Desulfotalea psychrophila (strain LSv54 / DSM 12343)).